The chain runs to 361 residues: Rho-GTPase-activating protein 5 (361 aa).

The region spanning 52 to 245 is the Rho-GAP domain; that stretch reads IFLTRRDGEK…FLINHQGSFI (194 aa). A compositionally biased stretch (low complexity) spans 306–323; the sequence is SSATYSNSPSSNFSNMKS. Residues 306–345 form a disordered region; sequence SSATYSNSPSSNFSNMKSSEVDPGSPPRIKSRSYSLSRSS.

The protein localises to the membrane. Its function is as follows. GTPase-activating protein for Rho1. Has a role in the negative regulation of (1-3)beta-D-glucan synthase activity and cell integrity. In Schizosaccharomyces pombe (strain 972 / ATCC 24843) (Fission yeast), this protein is Rho-GTPase-activating protein 5 (rga5).